Reading from the N-terminus, the 401-residue chain is Pectate lyase (401 aa).

Residues 1–20 (MATTILPLILFISSLAIASS) form the signal peptide. Residue Asn-38 is glycosylated (N-linked (GlcNAc...) asparagine). Asp-199, Asp-223, and Asp-227 together coordinate Ca(2+). The active site involves Arg-279.

It belongs to the polysaccharide lyase 1 family. Requires Ca(2+) as cofactor. As to expression, expressed in sites of vascular differentiation and in new primordia on the flank of the shoot meristem.

It carries out the reaction Eliminative cleavage of (1-&gt;4)-alpha-D-galacturonan to give oligosaccharides with 4-deoxy-alpha-D-galact-4-enuronosyl groups at their non-reducing ends.. It functions in the pathway glycan metabolism; pectin degradation; 2-dehydro-3-deoxy-D-gluconate from pectin: step 2/5. Involved in the degradation of pectin. May assist in the removal and modification of an existing pectin matrix in order to allow the deposition of newly synthesized walls polymers for a specialized function or to create an architecture that is extensible. The sequence is that of Pectate lyase from Zinnia elegans (Garden zinnia).